A 286-amino-acid chain; its full sequence is ATP synthase gamma chain (286 aa).

The protein belongs to the ATPase gamma chain family. F-type ATPases have 2 components, CF(1) - the catalytic core - and CF(0) - the membrane proton channel. CF(1) has five subunits: alpha(3), beta(3), gamma(1), delta(1), epsilon(1). CF(0) has three main subunits: a, b and c.

It localises to the cell inner membrane. Produces ATP from ADP in the presence of a proton gradient across the membrane. The gamma chain is believed to be important in regulating ATPase activity and the flow of protons through the CF(0) complex. This Shewanella sp. (strain ANA-3) protein is ATP synthase gamma chain.